We begin with the raw amino-acid sequence, 423 residues long: CinA-like protein (423 aa).

The protein belongs to the CinA family.

In Prochlorococcus marinus (strain SARG / CCMP1375 / SS120), this protein is CinA-like protein.